Consider the following 634-residue polypeptide: Probable sulfate transporter 3.5 (634 aa).

The span at 1-12 shows a compositional bias: polar residues; that stretch reads MENTITSSTSSP. The interval 1-25 is disordered; sequence MENTITSSTSSPKGRGVNFSTPRGF. Over 1–81 the chain is Cytoplasmic; sequence MENTITSSTS…KYDMQKLKYD (81 aa). Residues 82–102 form a helical membrane-spanning segment; the sequence is VLAGITITSLAVPQGISYAKL. At 103–104 the chain is on the extracellular side; that stretch reads AS. The chain crosses the membrane as a helical span at residues 105 to 125; the sequence is IPPIIGLYSSFVPPFVYAVFG. Residues 126 to 130 are Cytoplasmic-facing; that stretch reads SSNNL. The helical transmembrane segment at 131–151 threads the bilayer; it reads AVGTVAACSLLIAETFGEEMI. The Extracellular segment spans residues 152–158; sequence KNEPELY. A helical transmembrane segment spans residues 159–179; sequence LHLIFTATLITGLFQFAMGFL. Topologically, residues 180–195 are cytoplasmic; it reads RLGILVDFLSHSTITG. Residues 196–216 traverse the membrane as a helical segment; it reads FMGGTAIIILLQQLKGIFGLV. Residues 217–239 are Extracellular-facing; that stretch reads HFTHKTDVVSVLHSILDNRAEWK. The chain crosses the membrane as a helical span at residues 240-260; that stretch reads WQSTLAGVCFLVFLQSTRYIK. The Cytoplasmic portion of the chain corresponds to 261–265; it reads QRYPK. The helical transmembrane segment at 266–286 threads the bilayer; sequence LFWVSAMGPMVVVVVGCVVAY. Topologically, residues 287 to 321 are extracellular; the sequence is LVKGTAHGIATVGPLKKGLNPPSIQLLNFDSKYLG. The helical transmembrane segment at 322 to 342 threads the bilayer; sequence MVFKAGIVTGLIALAEGIAIG. The Cytoplasmic segment spans residues 343–358; that stretch reads RSFAVMKNEQTDGNKE. The chain crosses the membrane as a helical span at residues 359–379; it reads MIAFGLMNVIGSFTSCYLTTG. Over 380-395 the chain is Extracellular; that stretch reads PFSKTAVNYNAGTKTP. Residues 396 to 416 form a helical membrane-spanning segment; sequence MSNVVMGVCMMLVLLFLAPLF. Topologically, residues 417–420 are cytoplasmic; sequence SYTP. The helical transmembrane segment at 421–441 threads the bilayer; that stretch reads LVGLSAIIMSAMLGLINYEEM. The Extracellular portion of the chain corresponds to 442 to 458; that stretch reads YHLFKVDKFDFLVCMSA. A helical transmembrane segment spans residues 459 to 479; sequence FFGVSFLSMDYGLIISVGFSI. Residues 480 to 634 lie on the Cytoplasmic side of the membrane; it reads VRALLYVARP…FNLTTTKPEV (155 aa). One can recognise an STAS domain in the interval 508-623; the sequence is QYPASEEMLG…LSIDDAVQAC (116 aa).

This sequence belongs to the SLC26A/SulP transporter (TC 2.A.53) family.

Its subcellular location is the membrane. In terms of biological role, h(+)/sulfate cotransporter that may play a role in the regulation of sulfate assimilation. This is Probable sulfate transporter 3.5 (SULTR3;5) from Arabidopsis thaliana (Mouse-ear cress).